Consider the following 436-residue polypeptide: Protein translocase subunit SecY (436 aa).

8 helical membrane-spanning segments follow: residues 17-37, 72-92, 122-142, 146-166, 209-229, 269-289, 309-329, and 380-400; these read ILLT…PVPY, FGLL…IQLL, TFFW…EVIF, LQVY…VLWF, FSNI…CIYI, VMPL…FEII, ISYW…IFFF, and IFLI…NLNI.

The protein belongs to the SecY/SEC61-alpha family. Component of the plastid Sec protein translocase complex, which is composed of at least SecY and SecE.

The protein resides in the plastid. The protein localises to the chloroplast thylakoid membrane. In terms of biological role, the central subunit of the protein translocation channel SecYE. Consists of two halves. These two domains form a lateral gate at the front which open onto the bilayer between TMs 2 and 7, and are clamped together by SecE at the back. The channel is closed by both a pore ring composed of hydrophobic SecY resides and a short helix (helix 2A) on the extracellular side of the membrane which forms a plug. This Vaucheria litorea (Yellow-green alga) protein is Protein translocase subunit SecY.